The chain runs to 338 residues: uncharacterized protein (338 aa).

3 helical membrane passes run 11-31 (ILSL…TFAI), 249-269 (IAVF…IIPA), and 318-338 (VPTP…GLGL).

It is found in the cell membrane. This is an uncharacterized protein from Methanocaldococcus jannaschii (strain ATCC 43067 / DSM 2661 / JAL-1 / JCM 10045 / NBRC 100440) (Methanococcus jannaschii).